Here is a 296-residue protein sequence, read N- to C-terminus: MKRLSDTSSAITHTNKSGIASFRNDQARLSLAFTDDAGTTRMTERSHFGPLRVQKTLYPEHPAVCHAIIVHPPGGIVGGDQLTITARVGDRAHALLTTPGAGKWYRANGQLSQQQVSLEVGADAALEWLPQETIFFNEADVRLEHNVTLAADARYIGGEILCFGRTASGETFDSGRVAQRTSIRRGGKLLWFEQGALQARSTSMHSPLSLAGYTVCATLIAVGKTMNGAFLNELREESSALAQGGRSGATQMKQVLVARYLGHSSETARLWMTRAWQRIRPELMQRDAVIPRIWNT.

This sequence belongs to the UreD family. UreD, UreF and UreG form a complex that acts as a GTP-hydrolysis-dependent molecular chaperone, activating the urease apoprotein by helping to assemble the nickel containing metallocenter of UreC. The UreE protein probably delivers the nickel.

The protein localises to the cytoplasm. Required for maturation of urease via the functional incorporation of the urease nickel metallocenter. The protein is Urease accessory protein UreD of Janthinobacterium sp. (strain Marseille) (Minibacterium massiliensis).